The primary structure comprises 328 residues: P2Y purinoceptor 3 (328 aa).

The Extracellular segment spans residues 1–22 (MSMANFTGGRNSCTFHEEFKQV). N5 carries N-linked (GlcNAc...) asparagine glycosylation. The helical transmembrane segment at 23-43 (LLPLVYSVVFLLGLPLNAVVI) threads the bilayer. At 44-57 (GQIWLARKALTRTT) the chain is on the cytoplasmic side. The helical transmembrane segment at 58-78 (IYMLNLAMADLLYVCSLPLLI) threads the bilayer. Residues 79-96 (YNYTQKDYWPFGDFTCKF) are Extracellular-facing. The cysteines at positions 94 and 172 are disulfide-linked. Residues 97-117 (VRFQFYTNLHGSILFLTCISV) form a helical membrane-spanning segment. The Cytoplasmic segment spans residues 118-139 (QRYMGICHPLASWHKKKGKKLT). A helical membrane pass occupies residues 140–160 (WLVCAAVWFIVIAQCLPTFVF). At 161 to 189 (ASTGTQRNRTVCYDLSPPDRSTSYFPYGI) the chain is on the extracellular side. A helical membrane pass occupies residues 190–210 (TLTITGFLLPFAAILACYCSM). Topologically, residues 211 to 231 (ARILCQKDELIGLAVHKKKDK) are cytoplasmic. A helical membrane pass occupies residues 232 to 252 (AVRMIIIVVIVFSISFFPFHL). The Extracellular portion of the chain corresponds to 253–275 (TKTIYLIVRSSASLPCPTLQAFA). The chain crosses the membrane as a helical span at residues 276-298 (IAYKCTRPFASMNSVLDPILFYF). Residues 299-323 (TQRKFRESTRYLLDKMSSKWRQDHC) are Cytoplasmic-facing.

This sequence belongs to the G-protein coupled receptor 1 family.

The protein localises to the cell membrane. Receptor for extracellular ADP &gt; UTP &gt; ATP = UDP. The activity of this receptor is mediated by G proteins which activate a phosphatidylinositol-calcium second messenger system. The chain is P2Y purinoceptor 3 (P2RY3) from Gallus gallus (Chicken).